Here is a 125-residue protein sequence, read N- to C-terminus: Aspartate 1-decarboxylase (125 aa).

Ser25 acts as the Schiff-base intermediate with substrate; via pyruvic acid in catalysis. Ser25 is subject to Pyruvic acid (Ser). Thr57 contributes to the substrate binding site. The active-site Proton donor is Tyr58. Residue 71–73 (GAA) participates in substrate binding.

The protein belongs to the PanD family. In terms of assembly, heterooctamer of four alpha and four beta subunits. Pyruvate serves as cofactor. Is synthesized initially as an inactive proenzyme, which is activated by self-cleavage at a specific serine bond to produce a beta-subunit with a hydroxyl group at its C-terminus and an alpha-subunit with a pyruvoyl group at its N-terminus.

Its subcellular location is the cytoplasm. The catalysed reaction is L-aspartate + H(+) = beta-alanine + CO2. The protein operates within cofactor biosynthesis; (R)-pantothenate biosynthesis; beta-alanine from L-aspartate: step 1/1. Catalyzes the pyruvoyl-dependent decarboxylation of aspartate to produce beta-alanine. The protein is Aspartate 1-decarboxylase of Hydrogenobaculum sp. (strain Y04AAS1).